The following is a 113-amino-acid chain: uncharacterized protein (113 aa).

The interval tyrosine 78–glutamate 113 is disordered.

This is an uncharacterized protein from Halobacterium phage phiH (Bacteriophage phi-H).